Consider the following 258-residue polypeptide: Synapse differentiation-inducing gene protein 1 (258 aa).

Topologically, residues 1–181 (MDGIVEQKSV…NFLMMPPRDH (181 aa)) are cytoplasmic. S137 is modified (phosphoserine). Residues 182-202 (LGLSVFSMLCCFWPLGIAAFY) traverse the membrane as a helical segment. The Extracellular segment spans residues 203-228 (LSHETNKAVAKGDFHQASTSSRRALF). The helical intramembrane region spans 229-249 (LAVLSITIGTGIYVGVAVALI). The Extracellular segment spans residues 250–258 (AYLSKNNHL).

Belongs to the CD225/Dispanin family. As to quaternary structure, homodimer. Interacts with GRIA1 and GRIA2. In terms of tissue distribution, enriched in the cerebellum and also expressed in the neocortex and modestly in the hippocampus (at protein level). Expressed in hippocampal neurons, both in cell body and neurites, however its presence is enriched at excitatory synapses and also found in postsynaptic cells.

The protein localises to the cell membrane. Its subcellular location is the early endosome membrane. The protein resides in the postsynaptic density membrane. It is found in the synapse. It localises to the cell projection. The protein localises to the dendrite. Its subcellular location is the dendritic spine. Its function is as follows. May regulate AMPA receptor content at nascent synapses, and have a role in postsynaptic development and maturation. The protein is Synapse differentiation-inducing gene protein 1 (Syndig1) of Rattus norvegicus (Rat).